The chain runs to 232 residues: Small ribosomal subunit protein uS3 (232 aa).

One can recognise a KH type-2 domain in the interval 39-107 (IRAFLKKKLY…EVNVNIKEER (69 aa)). Residues 211–232 (GVQPEKTEEEAPKKTRRARRGK) are disordered. The segment covering 213-223 (QPEKTEEEAPK) has biased composition (basic and acidic residues).

The protein belongs to the universal ribosomal protein uS3 family. As to quaternary structure, part of the 30S ribosomal subunit. Forms a tight complex with proteins S10 and S14.

Binds the lower part of the 30S subunit head. Binds mRNA in the 70S ribosome, positioning it for translation. This is Small ribosomal subunit protein uS3 from Campylobacter concisus (strain 13826).